The primary structure comprises 393 residues: Formate-dependent phosphoribosylglycinamide formyltransferase (393 aa).

N(1)-(5-phospho-beta-D-ribosyl)glycinamide is bound by residues 22–23 (EL) and Glu-82. Residues Arg-114, Lys-155, 160–165 (SSGKGQ), 195–198 (EGFI), and Glu-203 each bind ATP. In terms of domain architecture, ATP-grasp spans 119 to 308 (RLAAEELDLP…QFALHARAIL (190 aa)). Residues Glu-267 and Glu-279 each contribute to the Mg(2+) site. N(1)-(5-phospho-beta-D-ribosyl)glycinamide is bound by residues Asp-286, Lys-356, and 363 to 364 (RR).

The protein belongs to the PurK/PurT family. Homodimer.

The enzyme catalyses N(1)-(5-phospho-beta-D-ribosyl)glycinamide + formate + ATP = N(2)-formyl-N(1)-(5-phospho-beta-D-ribosyl)glycinamide + ADP + phosphate + H(+). It participates in purine metabolism; IMP biosynthesis via de novo pathway; N(2)-formyl-N(1)-(5-phospho-D-ribosyl)glycinamide from N(1)-(5-phospho-D-ribosyl)glycinamide (formate route): step 1/1. Functionally, involved in the de novo purine biosynthesis. Catalyzes the transfer of formate to 5-phospho-ribosyl-glycinamide (GAR), producing 5-phospho-ribosyl-N-formylglycinamide (FGAR). Formate is provided by PurU via hydrolysis of 10-formyl-tetrahydrofolate. This is Formate-dependent phosphoribosylglycinamide formyltransferase from Pseudomonas fluorescens (strain Pf0-1).